The following is a 600-amino-acid chain: Elongation factor 4 (600 aa).

Positions 3-185 (KYIRNFSIIA…CLIHDIPHPQ (183 aa)) constitute a tr-type G domain. GTP is bound by residues 15–20 (DHGKST) and 132–135 (NKID).

Belongs to the TRAFAC class translation factor GTPase superfamily. Classic translation factor GTPase family. LepA subfamily.

It localises to the cell inner membrane. It carries out the reaction GTP + H2O = GDP + phosphate + H(+). Required for accurate and efficient protein synthesis under certain stress conditions. May act as a fidelity factor of the translation reaction, by catalyzing a one-codon backward translocation of tRNAs on improperly translocated ribosomes. Back-translocation proceeds from a post-translocation (POST) complex to a pre-translocation (PRE) complex, thus giving elongation factor G a second chance to translocate the tRNAs correctly. Binds to ribosomes in a GTP-dependent manner. This chain is Elongation factor 4, found in Blochmanniella pennsylvanica (strain BPEN).